A 375-amino-acid chain; its full sequence is Actin-binding Rho-activating protein (375 aa).

Basic and acidic residues-rich tracts occupy residues 1-11 (MAPGEREREAG) and 79-99 (KPDR…SHIK). Disordered regions lie at residues 1-20 (MAPG…LRKV) and 38-99 (NENS…SHIK). Ser150 and Ser182 each carry phosphoserine. The span at 173–182 (QEEPTWKSDS) shows a compositional bias: basic and acidic residues. Positions 173 to 204 (QEEPTWKSDSVDTEDSGYGGDMEERPEQDAAP) are disordered. Actin-binding regions lie at residues 193-293 (DMEE…AERA) and 294-375 (KRAE…TLLE). Interaction with actin regions lie at residues 234–279 (SQVD…GDEG) and 346–375 (MRAR…TLLE).

As to quaternary structure, binds F-actin and ABLIM1, ABLIM2 and ABLIM3. Interaction with ABLIM2 and ABLIM3 enhances activity. In terms of tissue distribution, expressed specifically in heart and skeletal muscle.

It is found in the cytoplasm. The protein localises to the myofibril. It localises to the sarcomere. The protein resides in the cytoskeleton. Functionally, acts as an activator of serum response factor (SRF)-dependent transcription possibly by inducing nuclear translocation of MKL1 or MKL2 and through a mechanism requiring Rho-actin signaling. This is Actin-binding Rho-activating protein from Mus musculus (Mouse).